Consider the following 1111-residue polypeptide: Myosin IB heavy chain (1111 aa).

A Myosin motor domain is found at 9–691 (QGTDDLVMLP…TVFLLEEALD (683 aa)). 102 to 109 (GESGAGKT) lines the ATP pocket. A Phosphoserine modification is found at S332. The tract at residues 547 to 627 (GSLQKKRPTT…GFAYRNTFDK (81 aa)) is actin-binding. One can recognise a TH1 domain in the interval 729 to 913 (KERQRNSIDR…KGLIGTIASG (185 aa)). Positions 910-1058 (IASGLPSSTD…PAPQPSRPTA (149 aa)) are disordered. A compositionally biased stretch (polar residues) spans 914–928 (LPSSTDSTPKNYNPN). 3 stretches are compositionally biased toward low complexity: residues 929–944 (SMSQASSRPAPQQSAG), 952–967 (GAGQPQPQQPQQQQRP), and 991–1012 (PMGAPQQGGAPQQGAGRQLPQP). Over residues 1017-1040 (GAPGGRGAPMGRGAPGGGPAGAGG) the composition is skewed to gly residues. The SH3 domain occupies 1053 to 1111 (PSRPTAKALYDYDASSTDELSFKEGDIIFIVQKDNGGWTQGELKSGQKGWAPTNYLQYN).

It belongs to the TRAFAC class myosin-kinesin ATPase superfamily. Myosin family. As to quaternary structure, myosin I heavy chain is single-headed. Dimer of a heavy and a light chain. Inability to self-assemble into filaments.

The protein resides in the cell projection. The protein localises to the pseudopodium. Its subcellular location is the cytoplasm. It is found in the cell cortex. Functionally, myosin is a protein that binds to actin and has ATPase activity that is activated by actin. Myosin IB may have a role in chemotaxis and aggregation; it could serve to stabilize and even retract cortical structures, such as pseudopods and lamellopods. Involved in the whole cell motility of aggregation-stages cells. Overexpression results in significant decrease in the rate of cellular translocation and fluid-phase pinocytosis and abnormalities in the normal rearrangement of the actin cytoskeleton. This chain is Myosin IB heavy chain (myoB), found in Dictyostelium discoideum (Social amoeba).